We begin with the raw amino-acid sequence, 49 residues long: Zinc-containing ferredoxin (49 aa).

Positions 1–36 are N-terminal extension; it reads GIDPNYRTSRQVVGEHQGHKVYGPVDPPKVLGIHGT. Zn(2+) contacts are provided by His-16 and His-19. Lys-29 carries the post-translational modification N6-methyllysine. His-34 is a binding site for Zn(2+). The tract at residues 37-49 is ferredoxin; it reads IVXVDFDLCIADG. Position 45 (Cys-45) interacts with [3Fe-4S] cluster.

The cofactor is [3Fe-4S] cluster. Requires [4Fe-4S] cluster as cofactor. It depends on Zn(2+) as a cofactor.

In terms of biological role, ferredoxins are iron-sulfur proteins that transfer electrons in a wide variety of metabolic reactions. This chain is Zinc-containing ferredoxin (zfx), found in Acidianus infernus.